We begin with the raw amino-acid sequence, 155 residues long: Small ribosomal subunit protein uS9 (155 aa).

This sequence belongs to the universal ribosomal protein uS9 family.

This Allorhizobium ampelinum (strain ATCC BAA-846 / DSM 112012 / S4) (Agrobacterium vitis (strain S4)) protein is Small ribosomal subunit protein uS9.